The following is a 184-amino-acid chain: ATP synthase subunit b, chloroplastic (184 aa).

Residues 27 to 49 (LATNPINLSVVLGVLIFFGKGVL) form a helical membrane-spanning segment.

This sequence belongs to the ATPase B chain family. In terms of assembly, F-type ATPases have 2 components, F(1) - the catalytic core - and F(0) - the membrane proton channel. F(1) has five subunits: alpha(3), beta(3), gamma(1), delta(1), epsilon(1). F(0) has four main subunits: a(1), b(1), b'(1) and c(10-14). The alpha and beta chains form an alternating ring which encloses part of the gamma chain. F(1) is attached to F(0) by a central stalk formed by the gamma and epsilon chains, while a peripheral stalk is formed by the delta, b and b' chains.

It localises to the plastid. It is found in the chloroplast thylakoid membrane. Its function is as follows. F(1)F(0) ATP synthase produces ATP from ADP in the presence of a proton or sodium gradient. F-type ATPases consist of two structural domains, F(1) containing the extramembraneous catalytic core and F(0) containing the membrane proton channel, linked together by a central stalk and a peripheral stalk. During catalysis, ATP synthesis in the catalytic domain of F(1) is coupled via a rotary mechanism of the central stalk subunits to proton translocation. Component of the F(0) channel, it forms part of the peripheral stalk, linking F(1) to F(0). The protein is ATP synthase subunit b, chloroplastic of Nicotiana tomentosiformis (Tobacco).